Here is a 686-residue protein sequence, read N- to C-terminus: Glycogenin (686 aa).

Leucine 13, asparagine 16, tyrosine 19, and arginine 82 together coordinate UDP. 13 residues coordinate UDP-alpha-D-glucose: leucine 13, asparagine 16, tyrosine 19, arginine 82, lysine 91, aspartate 107, alanine 108, aspartate 109, asparagine 139, threonine 140, aspartate 166, aspartate 169, and glutamine 170. UDP is bound by residues aspartate 107, alanine 108, and aspartate 109. Aspartate 107 serves as a coordination point for Mn(2+). Aspartate 109 provides a ligand contact to Mn(2+). 2 O-linked (Glc...) tyrosine glycosylation sites follow: tyrosine 196 and tyrosine 198. Positions 213, 216, and 219 each coordinate UDP. Position 213 (histidine 213) interacts with Mn(2+). The UDP-alpha-D-glucose site is built by glycine 216 and lysine 219. Disordered regions lie at residues 264–331 (VKGE…ANFP), 381–444 (PEPT…RGNA), 460–533 (KHRR…GVPA), and 603–686 (KPLR…VLET). 2 stretches are compositionally biased toward low complexity: residues 285–308 (SSQS…YTSH) and 398–416 (SAAS…ASPT). Residues 307–686 (SHGASWDASR…TEEERDVLET (380 aa)) are not required for catalytic activity. Composition is skewed to polar residues over residues 424–442 (VTPT…TTRG) and 471–483 (AATS…GRAQ). Acidic residues predominate over residues 677–686 (TEEERDVLET).

Belongs to the glycosyltransferase 8 family. Glycogenin subfamily. In terms of assembly, interacts with glycogen synthase gsy-1; the interaction is direct. Mn(2+) is required as a cofactor.

It localises to the cytoplasm. The protein localises to the vacuole. The enzyme catalyses L-tyrosyl-[glycogenin] + UDP-alpha-D-glucose = alpha-D-glucosyl-L-tyrosyl-[glycogenin] + UDP + H(+). The catalysed reaction is [1,4-alpha-D-glucosyl](n)-L-tyrosyl-[glycogenin] + UDP-alpha-D-glucose = [1,4-alpha-D-glucosyl](n+1)-L-tyrosyl-[glycogenin] + UDP + H(+). Functionally, self-glucosylating initiator of glycogen synthesis. It catalyzes the formation of a short alpha (1,4)-glucosyl chain covalently attached via a glucose 1-O-tyrosyl linkage to internal tyrosine residues and these chains act as primers for the elongation reaction catalyzed by glycogen synthase. This chain is Glycogenin, found in Neurospora crassa (strain ATCC 24698 / 74-OR23-1A / CBS 708.71 / DSM 1257 / FGSC 987).